A 41-amino-acid chain; its full sequence is Ornatin-A2 (41 aa).

Residues 33 to 35 (RGD) carry the Cell attachment site motif.

The protein belongs to the ornatin family.

It localises to the secreted. Functionally, potent inhibitor of fibrinogen interaction with platelet receptors expressed on glycoprotein IIb-IIIa complex. May prevent blood from clotting during either feeding and/or storage of ingested blood. The chain is Ornatin-A2 from Placobdella ornata (Turtle leech).